We begin with the raw amino-acid sequence, 33 residues long: Brevinin-2LT (33 aa).

C27 and C33 form a disulfide bridge.

As to expression, expressed by the skin glands.

Its subcellular location is the secreted. Its function is as follows. Has antibacterial activity. The protein is Brevinin-2LT of Rana latastei (Italian agile frog).